A 139-amino-acid polypeptide reads, in one-letter code: ATP synthase epsilon chain (139 aa).

Belongs to the ATPase epsilon chain family. In terms of assembly, F-type ATPases have 2 components, CF(1) - the catalytic core - and CF(0) - the membrane proton channel. CF(1) has five subunits: alpha(3), beta(3), gamma(1), delta(1), epsilon(1). CF(0) has three main subunits: a, b and c.

The protein resides in the cell inner membrane. In terms of biological role, produces ATP from ADP in the presence of a proton gradient across the membrane. This is ATP synthase epsilon chain from Salmonella arizonae (strain ATCC BAA-731 / CDC346-86 / RSK2980).